The sequence spans 307 residues: Acetaldehyde dehydrogenase (307 aa).

Residue 12-15 coordinates NAD(+); that stretch reads SGNI. The active-site Acyl-thioester intermediate is Cys127. NAD(+)-binding positions include 158-166 and Asn278; that span reads SAGPGTRQN.

It belongs to the acetaldehyde dehydrogenase family. In terms of assembly, monomer. Can also form a heterotetramer composed of two aldolase (TTHB246) and two dehydrogenase (TTHB247) subunits. Upon complex formation, the aldolase shows a 5-fold increase in substrate affinity, while the dehydrogenase shows a 3-fold decrease; the kcat values of each enzyme are reduced by 2-fold when they are in a complex.

The catalysed reaction is acetaldehyde + NAD(+) + CoA = acetyl-CoA + NADH + H(+). It catalyses the reaction propanal + NAD(+) + CoA = propanoyl-CoA + NADH + H(+). In terms of biological role, catalyzes the conversion of acetaldehyde or propanal to acetyl-CoA or propanoyl-CoA, respectively, using NAD(+) and coenzyme A. The aldehyde substrates can be directly channeled from the aldolase TTHB246 to the dehydrogenase TTHB247. Is the final enzyme in the meta-cleavage pathway for the degradation of aromatic compounds. This is Acetaldehyde dehydrogenase from Thermus thermophilus (strain ATCC 27634 / DSM 579 / HB8).